A 132-amino-acid polypeptide reads, in one-letter code: Putative holo-[acyl-carrier-protein] synthase (132 aa).

Mg(2+)-binding residues include Asp-6 and Glu-67.

It belongs to the P-Pant transferase superfamily. AcpS family.

It catalyses the reaction apo-[ACP] + CoA = holo-[ACP] + adenosine 3',5'-bisphosphate + H(+). In terms of biological role, transfers the 4'-phosphopantetheine moiety from coenzyme A to a Ser of acyl-carrier-protein. The sequence is that of Putative holo-[acyl-carrier-protein] synthase (new8) from Schizosaccharomyces pombe (strain 972 / ATCC 24843) (Fission yeast).